The following is a 398-amino-acid chain: Lipoyl synthase, mitochondrial (398 aa).

The N-terminal 32 residues, 1 to 32 (MIALRVHNTRVVSRSLTVWTRPSPTLTLSRSL), are a transit peptide targeting the mitochondrion. Residues Cys117, Cys122, Cys128, Cys147, Cys151, Cys154, and Ser362 each coordinate [4Fe-4S] cluster. Residues 132–351 (KKSEATATIM…RDTALEMGFL (220 aa)) enclose the Radical SAM core domain.

Belongs to the radical SAM superfamily. Lipoyl synthase family. The cofactor is [4Fe-4S] cluster.

The protein resides in the mitochondrion. The catalysed reaction is [[Fe-S] cluster scaffold protein carrying a second [4Fe-4S](2+) cluster] + N(6)-octanoyl-L-lysyl-[protein] + 2 oxidized [2Fe-2S]-[ferredoxin] + 2 S-adenosyl-L-methionine + 4 H(+) = [[Fe-S] cluster scaffold protein] + N(6)-[(R)-dihydrolipoyl]-L-lysyl-[protein] + 4 Fe(3+) + 2 hydrogen sulfide + 2 5'-deoxyadenosine + 2 L-methionine + 2 reduced [2Fe-2S]-[ferredoxin]. The protein operates within protein modification; protein lipoylation via endogenous pathway; protein N(6)-(lipoyl)lysine from octanoyl-[acyl-carrier-protein]: step 2/2. In terms of biological role, catalyzes the radical-mediated insertion of two sulfur atoms into the C-6 and C-8 positions of the octanoyl moiety bound to the lipoyl domains of lipoate-dependent enzymes, thereby converting the octanoylated domains into lipoylated derivatives. The sequence is that of Lipoyl synthase, mitochondrial from Scheffersomyces stipitis (strain ATCC 58785 / CBS 6054 / NBRC 10063 / NRRL Y-11545) (Yeast).